The following is a 167-amino-acid chain: Neutrophilic granule protein (167 aa).

Residues 1–21 form the signal peptide; that stretch reads MAGLWKTFVLVVALAVVSCEA. The interval 122–141 is disordered; it reads EDTQETSFNDKQDVSEKEKF.

Belongs to the cathelicidin family. As to quaternary structure, monomer. Homodimer; disulfide-linked. As to expression, expressed in myeloid bone marrow cells. Expressed in neutrophilic precursors (at protein level). Expressed in myeloid bone marrow cells.

It is found in the secreted. The protein localises to the cytoplasmic granule. Functionally, acts as an inhibitor of cathepsin B (CTSB) activity. Plays a role as a negative regulator of tumor vascular development, cell invasion and metastasis. The protein is Neutrophilic granule protein of Mus musculus (Mouse).